A 128-amino-acid chain; its full sequence is Sulfurtransferase TusD (128 aa).

Cys78 serves as the catalytic Cysteine persulfide intermediate.

This sequence belongs to the DsrE/TusD family. Heterohexamer, formed by a dimer of trimers. The hexameric TusBCD complex contains 2 copies each of TusB, TusC and TusD. The TusBCD complex interacts with TusE.

It is found in the cytoplasm. Functionally, part of a sulfur-relay system required for 2-thiolation of 5-methylaminomethyl-2-thiouridine (mnm(5)s(2)U) at tRNA wobble positions. Accepts sulfur from TusA and transfers it in turn to TusE. The chain is Sulfurtransferase TusD from Buchnera aphidicola subsp. Schizaphis graminum (strain Sg).